The primary structure comprises 116 residues: Aspartate 1-decarboxylase (116 aa).

The active-site Schiff-base intermediate with substrate; via pyruvic acid is Ser-25. Residue Ser-25 is modified to Pyruvic acid (Ser). Substrate is bound at residue Thr-57. Tyr-58 functions as the Proton donor in the catalytic mechanism. 73-75 (GAA) contributes to the substrate binding site.

It belongs to the PanD family. In terms of assembly, heterooctamer of four alpha and four beta subunits. Pyruvate serves as cofactor. In terms of processing, is synthesized initially as an inactive proenzyme, which is activated by self-cleavage at a specific serine bond to produce a beta-subunit with a hydroxyl group at its C-terminus and an alpha-subunit with a pyruvoyl group at its N-terminus.

The protein localises to the cytoplasm. The enzyme catalyses L-aspartate + H(+) = beta-alanine + CO2. The protein operates within cofactor biosynthesis; (R)-pantothenate biosynthesis; beta-alanine from L-aspartate: step 1/1. Functionally, catalyzes the pyruvoyl-dependent decarboxylation of aspartate to produce beta-alanine. The polypeptide is Aspartate 1-decarboxylase (Parabacteroides distasonis (strain ATCC 8503 / DSM 20701 / CIP 104284 / JCM 5825 / NCTC 11152)).